Here is a 554-residue protein sequence, read N- to C-terminus: Arginine--tRNA ligase (554 aa).

A 'HIGH' region motif is present at residues 132–142 (ANPTGPIHLGG).

Belongs to the class-I aminoacyl-tRNA synthetase family. In terms of assembly, monomer.

The protein resides in the cytoplasm. It catalyses the reaction tRNA(Arg) + L-arginine + ATP = L-arginyl-tRNA(Arg) + AMP + diphosphate. The protein is Arginine--tRNA ligase of Clavibacter sepedonicus (Clavibacter michiganensis subsp. sepedonicus).